The primary structure comprises 292 residues: Methylamine utilization protein MauJ (292 aa).

It functions in the pathway one-carbon metabolism; methylamine degradation. The sequence is that of Methylamine utilization protein MauJ (mauJ) from Paracoccus versutus (Thiobacillus versutus).